The following is a 53-amino-acid chain: uncharacterized protein (53 aa).

This is an uncharacterized protein from Bacillus subtilis (strain 168).